A 270-amino-acid polypeptide reads, in one-letter code: tRNA pseudouridine synthase A (270 aa).

Asp-51 acts as the Nucleophile in catalysis. Residue Tyr-109 coordinates substrate.

The protein belongs to the tRNA pseudouridine synthase TruA family. Homodimer.

The enzyme catalyses uridine(38/39/40) in tRNA = pseudouridine(38/39/40) in tRNA. Its function is as follows. Formation of pseudouridine at positions 38, 39 and 40 in the anticodon stem and loop of transfer RNAs. This Burkholderia thailandensis (strain ATCC 700388 / DSM 13276 / CCUG 48851 / CIP 106301 / E264) protein is tRNA pseudouridine synthase A.